A 194-amino-acid polypeptide reads, in one-letter code: DNA replication complex GINS protein PSF3 (194 aa).

It belongs to the GINS3/PSF3 family. In terms of assembly, component of the GINS complex which is a heterotetramer of SLD5, PSF1, PSF2 and PSF3.

It is found in the nucleus. In terms of biological role, functions as part of the GINS complex which plays an essential role in the initiation of DNA replication by binding to DNA replication origins and facilitating the assembly of the DNA replication machinery. This chain is DNA replication complex GINS protein PSF3, found in Saccharomyces cerevisiae (strain ATCC 204508 / S288c) (Baker's yeast).